Reading from the N-terminus, the 297-residue chain is Acetylglutamate kinase (297 aa).

Substrate-binding positions include 72-73 (GG), Arg-94, and Asn-193.

This sequence belongs to the acetylglutamate kinase family. ArgB subfamily.

It localises to the cytoplasm. It catalyses the reaction N-acetyl-L-glutamate + ATP = N-acetyl-L-glutamyl 5-phosphate + ADP. It functions in the pathway amino-acid biosynthesis; L-arginine biosynthesis; N(2)-acetyl-L-ornithine from L-glutamate: step 2/4. Catalyzes the ATP-dependent phosphorylation of N-acetyl-L-glutamate. This chain is Acetylglutamate kinase, found in Mycobacterium leprae (strain TN).